A 188-amino-acid polypeptide reads, in one-letter code: Probable manganese efflux pump MntP (188 aa).

Helical transmembrane passes span 3 to 23 (ITAT…ASIG), 66 to 86 (LEWN…RMII), 106 to 128 (WLLV…GLAF), 143 to 163 (ATLI…PILG), and 168 to 188 (ILGG…HFHG).

The protein belongs to the MntP (TC 9.B.29) family.

The protein resides in the cell inner membrane. Its function is as follows. Probably functions as a manganese efflux pump. The polypeptide is Probable manganese efflux pump MntP (Escherichia fergusonii (strain ATCC 35469 / DSM 13698 / CCUG 18766 / IAM 14443 / JCM 21226 / LMG 7866 / NBRC 102419 / NCTC 12128 / CDC 0568-73)).